Consider the following 393-residue polypeptide: CCA-adding enzyme (393 aa).

ATP-binding residues include G27 and R30. CTP-binding residues include G27 and R30. Positions 40 and 42 each coordinate Mg(2+). The ATP site is built by R111, D154, R157, R160, and R163. Residues R111, D154, R157, R160, and R163 each coordinate CTP.

This sequence belongs to the tRNA nucleotidyltransferase/poly(A) polymerase family. Bacterial CCA-adding enzyme type 3 subfamily. In terms of assembly, homodimer. It depends on Mg(2+) as a cofactor.

It carries out the reaction a tRNA precursor + 2 CTP + ATP = a tRNA with a 3' CCA end + 3 diphosphate. The enzyme catalyses a tRNA with a 3' CCA end + 2 CTP + ATP = a tRNA with a 3' CCACCA end + 3 diphosphate. In terms of biological role, catalyzes the addition and repair of the essential 3'-terminal CCA sequence in tRNAs without using a nucleic acid template. Adds these three nucleotides in the order of C, C, and A to the tRNA nucleotide-73, using CTP and ATP as substrates and producing inorganic pyrophosphate. tRNA 3'-terminal CCA addition is required both for tRNA processing and repair. Also involved in tRNA surveillance by mediating tandem CCA addition to generate a CCACCA at the 3' terminus of unstable tRNAs. While stable tRNAs receive only 3'-terminal CCA, unstable tRNAs are marked with CCACCA and rapidly degraded. The chain is CCA-adding enzyme from Listeria monocytogenes serotype 4b (strain CLIP80459).